Here is a 422-residue protein sequence, read N- to C-terminus: Fasciclin-like arabinogalactan protein 10 (422 aa).

The N-terminal stretch at 1-25 (MATSRAFTLFAFTLSLLTVASTVSG) is a signal peptide. FAS1 domains are found at residues 26-172 (HNIT…NAPI) and 187-327 (GVSN…DNVL). 5 N-linked (GlcNAc...) asparagine glycosylation sites follow: N27, N128, N162, N190, and N244. The disordered stretch occupies residues 336–397 (SSSPAPAPEP…PTSSENSNAK (62 aa)). Residues 340–374 (APAPEPVSAPTPTPAKSPSPVEAPSPTAASPPAPP) show a composition bias toward pro residues. Residues 386–397 (DSPTSSENSNAK) show a composition bias toward polar residues. The GPI-anchor amidated asparagine moiety is linked to residue N398. Residues 399–422 (AAFHVNAPALFTALVTIAATSLLL) constitute a propeptide, removed in mature form.

Belongs to the fasciclin-like AGP family.

The protein localises to the cell membrane. Functionally, may be a cell surface adhesion protein. This chain is Fasciclin-like arabinogalactan protein 10 (FLA10), found in Arabidopsis thaliana (Mouse-ear cress).